The following is a 367-amino-acid chain: Probable ATP-dependent RNA helicase MJ0669 (367 aa).

Residues 6–34 (MNFNELNLSDNILNAIRNKGFEKPTDIQM) carry the Q motif motif. The 169-residue stretch at 38–206 (PLFLNDEYNI…KKYMGDYSFI (169 aa)) folds into the Helicase ATP-binding domain. 51 to 58 (ARTGSGKT) contacts ATP. A DEAD box motif is present at residues 154–157 (DEAD). One can recognise a Helicase C-terminal domain in the interval 213-367 (NIEQSYVEVN…KLKIKKLKFG (155 aa)).

This sequence belongs to the DEAD box helicase family. Homodimer.

It catalyses the reaction ATP + H2O = ADP + phosphate + H(+). The protein is Probable ATP-dependent RNA helicase MJ0669 of Methanocaldococcus jannaschii (strain ATCC 43067 / DSM 2661 / JAL-1 / JCM 10045 / NBRC 100440) (Methanococcus jannaschii).